The following is a 196-amino-acid chain: Alpha-crystallin A chain (196 aa).

Methionine 1 is subject to N-acetylmethionine. Positions 1–63 are required for complex formation with BFSP1 and BFSP2; sequence MDVTIQHPWF…RTVLDSGISE (63 aa). Deamidated glutamine; partial is present on glutamine 6. Serine 45 carries the phosphoserine modification. The residue at position 50 (glutamine 50) is a Deamidated glutamine; partial. Residues 76 to 185 enclose the sHSP domain; it reads HAGNPKNNPG…GHSERAIPVS (110 aa). N6-acetyllysine is present on residues lysine 93 and lysine 122. Histidine 123 contributes to the Zn(2+) binding site. The residue at position 124 (asparagine 124) is a Deamidated asparagine; partial. Positions 125 and 130 each coordinate Zn(2+). Phosphoserine is present on serine 145. Asparagine 146 bears the Deamidated asparagine; partial mark. The segment at 168–196 is disordered; it reads KVQSGLDAGHSERAIPVSREEKPSSAPSS. Glutamine 170 is subject to Deamidated glutamine; partial. Positions 176 to 190 are enriched in basic and acidic residues; it reads GHSERAIPVSREEKP. Histidine 177 serves as a coordination point for Zn(2+). Residue serine 185 is glycosylated (O-linked (GlcNAc) serine).

Belongs to the small heat shock protein (HSP20) family. Heteropolymer composed of three CRYAA and one CRYAB subunits. Inter-subunit bridging via zinc ions enhances stability, which is crucial as there is no protein turn over in the lens. Can also form homodimers and homotetramers (dimers of dimers) which serve as the building blocks of homooligomers. Within homooligomers, the zinc-binding motif is created from residues of 3 different molecules. His-123 and Glu-125 from one molecule are ligands of the zinc ion, and His-130 and His-177 residues from additional molecules complete the site with tetrahedral coordination geometry. Part of a complex required for lens intermediate filament formation composed of BFSP1, BFSP2 and CRYAA. In terms of processing, acetylation at Lys-93 may increase chaperone activity. Post-translationally, undergoes age-dependent proteolytical cleavage at the C-terminus. Cleavage by m-calpain produces specifically alpha-crystallin A(1-162), cleavage by Capn3/Lp82 produces specifically alpha-crystallin A(1-168) which is the major truncated form during normal maturation and induced cataract formation. As to expression, highly expressed in eye lens. Also expressed in non-lenticular tissues such as brain, spleen, liver, lung, skin, small intestine and a several epithelial and fibroblast cell lines with highest levels in spleen.

Its subcellular location is the cytoplasm. It is found in the nucleus. Functionally, contributes to the transparency and refractive index of the lens. Acts as a chaperone, preventing aggregation of various proteins under a wide range of stress conditions. Required for the correct formation of lens intermediate filaments as part of a complex composed of BFSP1, BFSP2 and CRYAA. In terms of biological role, inhibits bacterial growth in the lens. In Rattus norvegicus (Rat), this protein is Alpha-crystallin A chain (Cryaa).